The chain runs to 996 residues: Sarcoplasmic/endoplasmic reticulum calcium ATPase 1 (996 aa).

Residues 1–48 are Cytoplasmic-facing; that stretch reads MENAHTKSPAECLSYFGVNEHTGLSPDQFKKNLDKFGYNELPAEEGKS. Residues 49-69 traverse the membrane as a helical segment; the sequence is IWDLIVEQFEDLLVRILLLAA. Topologically, residues 70–89 are lumenal; sequence CISFVLAWFEEGEETITAFV. A helical transmembrane segment spans residues 90 to 110; sequence EPFVILLILIANAIVGVWQER. Residues 111–253 are Cytoplasmic-facing; it reads NAEDAIEALK…QEKTPLQAKL (143 aa). The helical transmembrane segment at 254–273 threads the bilayer; it reads DEFGEQLSKVISLICVAVWA. Topologically, residues 274 to 295 are lumenal; it reads INIGHFNDPVHGGSWIRGAVYY. Residues 296–313 traverse the membrane as a helical segment; that stretch reads FKIAVALAVAAIPEGLPA. Ca(2+)-binding residues include V304, A305, I307, and E309. The Cytoplasmic segment spans residues 314-754; it reads VITTCLALGT…EEGRAIYNNM (441 aa). D351 acts as the 4-aspartylphosphate intermediate in catalysis. Positions 351 and 353 each coordinate Mg(2+). ATP is bound by residues T353, E442, R489, K512, R557, T622, G623, D624, R675, and K681. Residue D700 participates in Mg(2+) binding. An ATP-binding site is contributed by N703. A helical transmembrane segment spans residues 755–774; that stretch reads KQFIRYLISSNVGEVVCIFL. Ca(2+)-binding residues include N765 and E768. Topologically, residues 775–784 are lumenal; that stretch reads TAALGLPEAL. The helical transmembrane segment at 785–805 threads the bilayer; it reads IPVQLLWVNLVTDGLPATALG. Residues 785 to 805 are interaction with PLN; that stretch reads IPVQLLWVNLVTDGLPATALG. Residues N793, T796, and D797 each contribute to the Ca(2+) site. The Cytoplasmic portion of the chain corresponds to 806–825; it reads FNPPDLDIMGKPPRSPKEPL. The helical transmembrane segment at 826-848 threads the bilayer; that stretch reads ISGWLFFRYMAIGGYVGAATVGG. Residues 849–894 are Lumenal-facing; sequence AAWWFLYDSTGPAVTYYQLSHFMQCHNHNEDFTGVDCDIFEASPPM. The cysteines at positions 873 and 885 are disulfide-linked. Residues 895–914 form a helical membrane-spanning segment; the sequence is TMALSVLVTIEMCNALNSLS. E905 contacts Ca(2+). The Cytoplasmic portion of the chain corresponds to 915-927; that stretch reads ENQSLIRMPPWSN. The chain crosses the membrane as a helical span at residues 928-946; sequence LWLMAAMTLSMSLHFMIIY. Residues 929-940 are interaction with PLN; it reads WLMAAMTLSMSL. Residues 947-961 are Lumenal-facing; that stretch reads VDPLPMIFKLTHLTF. The chain crosses the membrane as a helical span at residues 962-982; sequence DQWLMVFKLSFPVILIDEVLK. The Cytoplasmic segment spans residues 983-996; it reads FFARNYIETGKEVK.

Belongs to the cation transport ATPase (P-type) (TC 3.A.3) family. Type IIA subfamily. In terms of assembly, interacts with sarcolipin (SLN). Interacts with phospholamban (PLN). Interacts with myoregulin (MRLN). Interacts with DWORF. Mg(2+) is required as a cofactor.

The protein resides in the endoplasmic reticulum membrane. Its subcellular location is the sarcoplasmic reticulum membrane. It catalyses the reaction Ca(2+)(in) + ATP + H2O = Ca(2+)(out) + ADP + phosphate + H(+). With respect to regulation, inhibited by sarcolipin (SLN) and myoregulin (MRLN). Also shown to be inhibited by phospholamban (PLN) in vitro. Enhanced by DWORF; DWORF increases activity by displacing sarcolipin (SLN), phospholamban (PLN) and myoregulin (MRLN). Functionally, key regulator of striated muscle performance by acting as the major Ca(2+) ATPase responsible for the reuptake of cytosolic Ca(2+) into the sarcoplasmic reticulum. Catalyzes the hydrolysis of ATP coupled with the translocation of calcium from the cytosol to the sarcoplasmic reticulum lumen. Contributes to calcium sequestration involved in muscular excitation/contraction. This Makaira nigricans (Atlantic blue marlin) protein is Sarcoplasmic/endoplasmic reticulum calcium ATPase 1 (atp2a1).